The chain runs to 250 residues: 3-deoxy-manno-octulosonate cytidylyltransferase (250 aa).

Belongs to the KdsB family.

Its subcellular location is the cytoplasm. It carries out the reaction 3-deoxy-alpha-D-manno-oct-2-ulosonate + CTP = CMP-3-deoxy-beta-D-manno-octulosonate + diphosphate. Its pathway is nucleotide-sugar biosynthesis; CMP-3-deoxy-D-manno-octulosonate biosynthesis; CMP-3-deoxy-D-manno-octulosonate from 3-deoxy-D-manno-octulosonate and CTP: step 1/1. It participates in bacterial outer membrane biogenesis; lipopolysaccharide biosynthesis. Its function is as follows. Activates KDO (a required 8-carbon sugar) for incorporation into bacterial lipopolysaccharide in Gram-negative bacteria. The protein is 3-deoxy-manno-octulosonate cytidylyltransferase of Yersinia pseudotuberculosis serotype O:1b (strain IP 31758).